The sequence spans 296 residues: MSLIKKPGGKTIEVVKNLPRITLANLRPNPGAKTLEKRRGRGMHGGNRSGWGHKGERQRCNRPRLGFEGGQTPFYLVIPKYGYNANHSRQPQYPPLSLRRLQYLIDLGRIDPSQPIDLTQLVNGRGVEIQPQKRDYGVQLVDEGADIFCAKVNLEVQAASEKAIAAVERNGGVITTSYYDPRSLQILIKPVPFFMPGEPIPKRLFPGEDLLPYYTDANNRGYLADPDKIQTARMDLAKKYGYSIPDISKDTLFEMLVQRKNPRHIFFGLSPGWVVNMADKKILKPTDDKVLQYYGS.

A mitochondrion-targeting transit peptide spans 1 to 20 (MSLIKKPGGKTIEVVKNLPR). The tract at residues 25–59 (NLRPNPGAKTLEKRRGRGMHGGNRSGWGHKGERQR) is disordered.

The protein belongs to the universal ribosomal protein uL15 family. Component of the mitochondrial ribosome large subunit (39S) which comprises a 16S rRNA and about 50 distinct proteins.

It is found in the mitochondrion. This is Large ribosomal subunit protein uL15m (mrpl15) from Danio rerio (Zebrafish).